The chain runs to 543 residues: CTP synthase (543 aa).

Positions 1 to 265 (MTNYIFVTGG…DELVVQRFGL (265 aa)) are amidoligase domain. A CTP-binding site is contributed by Ser-13. Ser-13 contacts UTP. ATP contacts are provided by residues 14 to 19 (SLGKGI) and Asp-71. Residues Asp-71 and Glu-139 each coordinate Mg(2+). CTP contacts are provided by residues 146-148 (DIE), 186-191 (KTKPTQ), and Lys-222. UTP contacts are provided by residues 186-191 (KTKPTQ) and Lys-222. 238-240 (KDA) lines the ATP pocket. The Glutamine amidotransferase type-1 domain maps to 290 to 541 (TIGMVGKYVE…VKAAGEYYKN (252 aa)). Gly-351 contributes to the L-glutamine binding site. Residue Cys-378 is the Nucleophile; for glutamine hydrolysis of the active site. L-glutamine contacts are provided by residues 379-382 (LGMQ), Glu-402, and Arg-469. Active-site residues include His-514 and Glu-516.

Belongs to the CTP synthase family. As to quaternary structure, homotetramer.

It carries out the reaction UTP + L-glutamine + ATP + H2O = CTP + L-glutamate + ADP + phosphate + 2 H(+). The enzyme catalyses L-glutamine + H2O = L-glutamate + NH4(+). The catalysed reaction is UTP + NH4(+) + ATP = CTP + ADP + phosphate + 2 H(+). It participates in pyrimidine metabolism; CTP biosynthesis via de novo pathway; CTP from UDP: step 2/2. Its activity is regulated as follows. Allosterically activated by GTP, when glutamine is the substrate; GTP has no effect on the reaction when ammonia is the substrate. The allosteric effector GTP functions by stabilizing the protein conformation that binds the tetrahedral intermediate(s) formed during glutamine hydrolysis. Inhibited by the product CTP, via allosteric rather than competitive inhibition. Functionally, catalyzes the ATP-dependent amination of UTP to CTP with either L-glutamine or ammonia as the source of nitrogen. Regulates intracellular CTP levels through interactions with the four ribonucleotide triphosphates. The chain is CTP synthase from Pseudoalteromonas atlantica (strain T6c / ATCC BAA-1087).